We begin with the raw amino-acid sequence, 632 residues long: Phosphomethylpyrimidine synthase (632 aa).

Substrate contacts are provided by residues N237, M266, Y295, H331, 351–353 (SRG), 392–395 (DGLR), and E431. H435 lines the Zn(2+) pocket. Residue Y458 participates in substrate binding. H499 is a binding site for Zn(2+). Residues C579, C582, and C587 each coordinate [4Fe-4S] cluster.

This sequence belongs to the ThiC family. As to quaternary structure, homodimer. It depends on [4Fe-4S] cluster as a cofactor.

The enzyme catalyses 5-amino-1-(5-phospho-beta-D-ribosyl)imidazole + S-adenosyl-L-methionine = 4-amino-2-methyl-5-(phosphooxymethyl)pyrimidine + CO + 5'-deoxyadenosine + formate + L-methionine + 3 H(+). Its pathway is cofactor biosynthesis; thiamine diphosphate biosynthesis. Functionally, catalyzes the synthesis of the hydroxymethylpyrimidine phosphate (HMP-P) moiety of thiamine from aminoimidazole ribotide (AIR) in a radical S-adenosyl-L-methionine (SAM)-dependent reaction. This Nitrosomonas eutropha (strain DSM 101675 / C91 / Nm57) protein is Phosphomethylpyrimidine synthase.